We begin with the raw amino-acid sequence, 966 residues long: MDSRCGVCKYIISDCERYVSDNTFYHVKCFICKICKCELPPCFRGKHASLMCGDCEIKLNAPKCFKSHFPIHSVSVVARNKEFHNNCFTCISCNEIIKGGFQYSDELFYCSKCDIIKPPPLPPPLIYKAPIATSKATTSITSPLPTKIPILSTANLIPPLSSSSPLATQISPKTSTIATTTVETTTAETTLPSPFKISQLKNSGDNIYSLSSPSSSSSSSSSSSSSSSSPPNTFNKSSDFLRNPLNNNVKSSSSSIGGNFVNKSQQQQQPIDSCSKSSISISPSSPRPTEDDIKEQVFLLQKQSVQLQIQQQLQQRQIEQLNKNQLGVQKPLNQQPQQQQQQFKPQSPNLSNNDTLDSFSNLNQSLPPPPLINTTTFSNPLLKTKNQSFPTPPTSHIIKENQSQQIPKPSSIDEVDQLPLPPPPITPIPSPSSSSIIINNQQQQQQESQLPPPPPTSIIIDQSILLPPPPPSTEILPQQQSPKLYKPRPKPIVLPPPPLDMEQLPLPPPPLLSSQINQSLKSTQHNQTTSPTIEIPIPPPLPIQKQSIPTRKPQLPQSSNPSPPSPPSPQPSSNIPPLSPKQQQEQQVEPIFSPTGSIIPTPPPPPPIFKMKPLRPQKFRAPTNYIPSLSLHRANKLSNSTEDHIKPPESLVLESSRIEKFEPTINGRKLTELLKHQTFDDIVGEVLNKRISIYKQLVKDDVIFGDVIAAGASGKVYKGIYKGRDVAIKVYSSENFCFNIDEFDREVTIMSLIDSDHPNFTRFYGANKQNKKYLFHVSELVKSGSLRDLLLDKEKPLLYFTQLSIASDIANAMKHLHSIGVIHRDLKSLNVLITEDFTAKVIDFGTSRNVDLAKHMTMNLGTSCYMSPELFKGNGYDETCDVYAFGIVLWEIIARKEPYENINSWSIPVMVAKGDRPTIPADCPSEYSKLIKACWTDKPKKRPSFKEICDTLKKISESLTLKRNKK.

2 LIM zinc-binding domains span residues 3 to 62 (SRCG…LNAP) and 63 to 120 (KCFK…KPPP). Disordered regions lie at residues 208 to 291 (YSLS…PTED) and 331 to 588 (PLNQ…EQQV). Residues 211 to 231 (SSPSSSSSSSSSSSSSSSSPP) show a composition bias toward low complexity. Residues 232-269 (NTFNKSSDFLRNPLNNNVKSSSSSIGGNFVNKSQQQQQ) show a composition bias toward polar residues. Low complexity-rich tracts occupy residues 270–284 (PIDS…ISPS) and 331–350 (PLNQ…SPNL). Positions 374–389 (TTTFSNPLLKTKNQSF) are enriched in polar residues. Positions 419-430 (PLPPPPITPIPS) are enriched in pro residues. A compositionally biased stretch (low complexity) spans 431-449 (PSSSSIIINNQQQQQQESQ). The segment covering 490 to 511 (KPIVLPPPPLDMEQLPLPPPPL) has biased composition (pro residues). Positions 513–526 (SSQINQSLKSTQHN) are enriched in polar residues. Over residues 543-560 (IQKQSIPTRKPQLPQSSN) the composition is skewed to low complexity. Residues 561–570 (PSPPSPPSPQ) show a composition bias toward pro residues. The Protein kinase domain occupies 702 to 959 (VIFGDVIAAG…DTLKKISESL (258 aa)). ATP contacts are provided by residues 708–716 (IAAGASGKV) and Lys-729. Asp-825 functions as the Proton acceptor in the catalytic mechanism.

The protein belongs to the protein kinase superfamily. TKL Ser/Thr protein kinase family.

The catalysed reaction is L-seryl-[protein] + ATP = O-phospho-L-seryl-[protein] + ADP + H(+). It carries out the reaction L-threonyl-[protein] + ATP = O-phospho-L-threonyl-[protein] + ADP + H(+). This is Probable LIM domain-containing serine/threonine-protein kinase DDB_G0286997 from Dictyostelium discoideum (Social amoeba).